A 324-amino-acid chain; its full sequence is MRCWVWLLVAIVLCQQLSVVRVLAAKKERKKGKDPHQFTEPFNVSLSNSEELHETDKLSETPDPGLPDAYTTWLGFVGRTDDGANSKKKCKGKDKKLRGLFGPPGPPGPQGPPGPPGMPGAEVTYEVLLQDFKQMLKEATERRLMSGDIPEHTSELPPIVLPVEDLSPYRRVDEGFHCRLKGQVIVDKKTLVELQNFQMPTAKGSFLRGSGLNLATGRFTASVPGIYQFSAHVHIDHSEIKSKAQLRPRDNVRVLICIESMCHRYTSLEVIAGLESNSKIFTVHVQGLLQLQVGQYTSIFVDNSAGAPITVQNGSDFMGILMGL.

Residues 1–24 (MRCWVWLLVAIVLCQQLSVVRVLA) form the signal peptide. Disordered regions lie at residues 28-66 (ERKKGKDPHQFTEPFNVSLSNSEELHETDKLSETPDPGL) and 83-121 (GANSKKKCKGKDKKLRGLFGPPGPPGPQGPPGPPGMPGA). A compositionally biased stretch (polar residues) spans 40-49 (EPFNVSLSNS). N-linked (GlcNAc...) asparagine glycosylation is present at Asn43. Over residues 50-60 (EELHETDKLSE) the composition is skewed to basic and acidic residues. Over residues 86 to 98 (SKKKCKGKDKKLR) the composition is skewed to basic residues. Residues 103 to 118 (PPGPPGPQGPPGPPGM) show a composition bias toward pro residues. The C1q domain maps to 169–324 (YRRVDEGFHC…SDFMGILMGL (156 aa)).

It belongs to the adipolin/erythroferrone family. As to quaternary structure, homomultimer; disulfide-linked.

The protein resides in the secreted. Insulin-sensitizing adipocyte-secreted protein (adipokine) that regulates glucose metabolism in liver and adipose tissue. In Xenopus tropicalis (Western clawed frog), this protein is Adipolin (c1qtnf12).